Consider the following 769-residue polypeptide: Serine protease HtrA-like (769 aa).

The span at 1 to 20 shows a compositional bias: basic residues; sequence MDIGKKHVIPKSQYRRKRRE. Residues 1 to 390 are disordered; that stretch reads MDIGKKHVIP…ATSKLNKGRA (390 aa). Basic and acidic residues-rich tracts occupy residues 21–64 and 71–108; these read FFHN…ERFK and LEQRNRDVNENKAEESKSNQDSKSAYNRDHYLTDDVSK. Positions 126–137 are enriched in polar residues; the sequence is YEQNSEATLSTK. The segment covering 138 to 186 has biased composition (basic and acidic residues); the sequence is STDKVESTDMRKLSSDKNKVGHEEQHVLSKPSEHDKETRIDFESSRTDS. Residues 247-262 are compositionally biased toward polar residues; it reads QQSQNEQTKTYTYGDS. Basic and acidic residues-rich tracts occupy residues 264–296 and 310–330; these read QNDKSNYENDLSHHMPSISDDKDNVMRENHIVD and KTDDDRKLDEKIHVEDKHKQN. A compositionally biased stretch (polar residues) spans 331-347; the sequence is ADSSETVGYQSQSSASH. Residues 348–364 show a composition bias toward basic and acidic residues; that stretch reads RITEKRNNAINDHDKLN. Residues 366-390 are compositionally biased toward polar residues; it reads QKPNAKTSANNNQKKATSKLNKGRA. The helical transmembrane segment at 410–430 threads the bilayer; sequence LVILMGIIILIVILNAIFNNV. Active-site charge relay system residues include H504, D534, and S619. The PDZ domain occupies 680–733; it reads IASLNSFERQAVKLPGKVKNGVVVDQVDNNGLADQSGLKKGDVITELDGKLLED.

It belongs to the peptidase S1C family.

The protein localises to the cell membrane. The chain is Serine protease HtrA-like from Staphylococcus aureus (strain MSSA476).